A 409-amino-acid polypeptide reads, in one-letter code: Serine/threonine transporter SstT (409 aa).

The next 9 helical transmembrane spans lie at 24–44 (LALG…AGLF), 48–68 (FVGA…AATI), 82–102 (IIVL…IAGM), 142–162 (AIAN…GAAL), 194–214 (LGIF…ALAG), 218–238 (LLAV…PAIV), 292–312 (IPLG…VLAM), 319–339 (GIQV…VSAC), and 365–385 (VAMQ…SAET).

The protein belongs to the dicarboxylate/amino acid:cation symporter (DAACS) (TC 2.A.23) family.

The protein resides in the cell inner membrane. The enzyme catalyses L-serine(in) + Na(+)(in) = L-serine(out) + Na(+)(out). It catalyses the reaction L-threonine(in) + Na(+)(in) = L-threonine(out) + Na(+)(out). Functionally, involved in the import of serine and threonine into the cell, with the concomitant import of sodium (symport system). The polypeptide is Serine/threonine transporter SstT (Neisseria gonorrhoeae (strain NCCP11945)).